The primary structure comprises 288 residues: Quinate/shikimate dehydrogenase (288 aa).

The substrate site is built by Lys-71 and Asp-107. Residues 132–135, 155–158, Lys-205, 232–235, and Gly-255 each bind NAD(+); these read AGGA, NRRD, and CVYN.

The protein belongs to the shikimate dehydrogenase family. In terms of assembly, homodimer.

It catalyses the reaction L-quinate + NAD(+) = 3-dehydroquinate + NADH + H(+). It carries out the reaction L-quinate + NADP(+) = 3-dehydroquinate + NADPH + H(+). The enzyme catalyses shikimate + NADP(+) = 3-dehydroshikimate + NADPH + H(+). The catalysed reaction is shikimate + NAD(+) = 3-dehydroshikimate + NADH + H(+). The protein operates within metabolic intermediate biosynthesis; chorismate biosynthesis; chorismate from D-erythrose 4-phosphate and phosphoenolpyruvate: step 4/7. Functionally, the actual biological function of YdiB remains unclear, nor is it known whether 3-dehydroshikimate or quinate represents the natural substrate. Catalyzes the reversible NAD-dependent reduction of both 3-dehydroshikimate (DHSA) and 3-dehydroquinate to yield shikimate (SA) and quinate, respectively. It can use both NAD or NADP for catalysis, however it has higher catalytic efficiency with NAD. This Escherichia coli O7:K1 (strain IAI39 / ExPEC) protein is Quinate/shikimate dehydrogenase.